Consider the following 266-residue polypeptide: Glucosamine-6-phosphate deaminase (266 aa).

The active-site Proton acceptor; for enolization step is the Asp72. The active-site For ring-opening step is the Asp141. His143 functions as the Proton acceptor; for ring-opening step in the catalytic mechanism. Glu148 serves as the catalytic For ring-opening step.

The protein belongs to the glucosamine/galactosamine-6-phosphate isomerase family. NagB subfamily. Homohexamer.

It carries out the reaction alpha-D-glucosamine 6-phosphate + H2O = beta-D-fructose 6-phosphate + NH4(+). The protein operates within amino-sugar metabolism; N-acetylneuraminate degradation; D-fructose 6-phosphate from N-acetylneuraminate: step 5/5. With respect to regulation, allosterically activated by N-acetylglucosamine 6-phosphate (GlcNAc6P). In terms of biological role, catalyzes the reversible isomerization-deamination of glucosamine 6-phosphate (GlcN6P) to form fructose 6-phosphate (Fru6P) and ammonium ion. This is Glucosamine-6-phosphate deaminase from Citrobacter koseri (strain ATCC BAA-895 / CDC 4225-83 / SGSC4696).